The primary structure comprises 52 residues: UPF0057 membrane protein At1g57550 (52 aa).

Helical transmembrane passes span 4-24 (FLEV…RYGL) and 30-50 (VCLL…IYVL).

This sequence belongs to the UPF0057 (PMP3) family.

The protein localises to the membrane. This chain is UPF0057 membrane protein At1g57550, found in Arabidopsis thaliana (Mouse-ear cress).